Here is a 261-residue protein sequence, read N- to C-terminus: Transmembrane protein 106A (261 aa).

The helical transmembrane segment at 95-115 threads the bilayer; it reads VFLAVSICLVTSSLIIFFLFP.

It belongs to the TMEM106 family.

Its subcellular location is the cell membrane. In terms of biological role, activates macrophages and polarizes them into M1-like macrophages through the activation of the MAPK and NF-kappaB signaling pathway. Upon activation, up-regulates the expression of CD80, CD86, CD69 and MHC II on macrophages, and induces the release of pro-inflammatory cytokines such as TNF, IL1B, IL6, CCL2 and nitric oxide. May play a role in inhibition of proliferation and migration. The polypeptide is Transmembrane protein 106A (TMEM106A) (Bos taurus (Bovine)).